A 138-amino-acid chain; its full sequence is Cofilin (138 aa).

The ADF-H domain maps to 2-136 (SSGVQPTQEC…TKDALFEKAT (135 aa)).

It belongs to the actin-binding proteins ADF family.

It localises to the cytoplasm. The protein localises to the cytoskeleton. The protein resides in the nucleus matrix. In terms of biological role, controls reversibly actin polymerization and depolymerization in a pH-sensitive manner. It has the ability to bind G- and F-actin in a 1:1 ratio of cofilin to actin. Binding to F-actin is regulated by tropomyosin. It is the major component of intranuclear and cytoplasmic actin rods. Required for accumulation of actin at the cell division site via depolymerizing actin at the cell ends. In association with myosin II has a role in the assembly of the contractile ring via severing actin filaments. Involved in the maintenance of the contractile ring once formed. In association with profilin and capping protein, has a role in the mitotic reorganization of the actin cytoskeleton. This chain is Cofilin (COF1), found in Cryptococcus neoformans var. neoformans serotype D (strain B-3501A) (Filobasidiella neoformans).